Consider the following 204-residue polypeptide: Tetraspanin-13 (204 aa).

The Cytoplasmic portion of the chain corresponds to 1-19; that stretch reads MVCGGFSCSKNCLCALNLL. A helical transmembrane segment spans residues 20 to 40; that stretch reads YTLVSLLLIGIAAWGIGFGLI. The Extracellular portion of the chain corresponds to 41 to 44; sequence SSLR. Residues 45-65 form a helical membrane-spanning segment; that stretch reads VVGVVIAVGIFLFLIALVGLI. Residues 66 to 72 are Cytoplasmic-facing; sequence GAVKHHQ. The chain crosses the membrane as a helical span at residues 73–93; sequence VLLFFYMIILLLVFIVQFSVS. Topologically, residues 94–167 are extracellular; it reads CACLALNREQ…IGEYAGEVLR (74 aa). N-linked (GlcNAc...) asparagine glycans are attached at residues Asn-113 and Asn-137. Ser-143 carries the post-translational modification Phosphoserine. A helical membrane pass occupies residues 168–188; that stretch reads FVGGIGLFFSFTEILGVWLTY. Topologically, residues 189-204 are cytoplasmic; the sequence is RYRNQKDPRANPSAFL.

This sequence belongs to the tetraspanin (TM4SF) family.

The protein localises to the membrane. The polypeptide is Tetraspanin-13 (Tspan13) (Rattus norvegicus (Rat)).